The chain runs to 63 residues: Beta-toxin NaTx36 (63 aa).

One can recognise an LCN-type CS-alpha/beta domain in the interval 1 to 62 (KDGYPMRSDG…VYDSATSKCR (62 aa)). Cystine bridges form between C11/C61, C15/C36, C22/C43, and C26/C45.

It belongs to the long (4 C-C) scorpion toxin superfamily. Sodium channel inhibitor family. Beta subfamily. Expressed by the venom gland.

The protein localises to the secreted. Functionally, beta toxins bind sodium channels (Nav) and shift the voltage of activation towards more negative potentials thereby affecting sodium channel activation and promoting spontaneous and repetitive firing. Only when tested on grasshopper mouse channels, this toxin inhibits Nav1.8/SCN10A sodium currents in a concentration and voltage-dependent manner (IC(50)=680 nM). This toxin hyperpolarizes the voltage dependence of Nav1.8/SCN10A activation, as well as steady-state fast inactivation and slow inactivation. In contrast to most beta scorpion toxins, this toxin inhibits grasshopper mouse Nav1.8/SCN10A currents through modulation of the domain I S4 voltage sensor, and the domain II second S5-S6 extracellular pore loop. The sequence is that of Beta-toxin NaTx36 from Centruroides sculpturatus (Arizona bark scorpion).